Here is a 347-residue protein sequence, read N- to C-terminus: Sensor protein VraS (347 aa).

Helical transmembrane passes span Ile-13–Ile-33 and Ile-43–Val-63. The Histidine kinase domain occupies Arg-150–Lys-341. Phosphohistidine is present on His-156.

Post-translationally, autophosphorylated on His-156.

The protein localises to the cell membrane. It carries out the reaction ATP + protein L-histidine = ADP + protein N-phospho-L-histidine.. In terms of biological role, member of the two-component regulatory system PprA/PprB involved in biofilm formation by controlling the expression of many related genes including type IVb pili major subunit flp pilin, adhesin bapA or cupE fimbriae. Also modulates quorum-sensing signal production acting on both negative and positive modulators. Functions as a heme sensor histidine kinase which is autophosphorylated at a histidine residue and transfers its phosphate group to PprB. The sequence is that of Sensor protein VraS (vraS) from Staphylococcus aureus (strain Mu3 / ATCC 700698).